A 380-amino-acid polypeptide reads, in one-letter code: Anthranilate phosphoribosyltransferase (380 aa).

5-phospho-alpha-D-ribose 1-diphosphate is bound by residues Gly109, Asn119, Ser121, Thr122, Lys142, Ser144, and Ser146. Mg(2+)-binding residues include Asp258 and Glu259.

It belongs to the anthranilate phosphoribosyltransferase family. As to quaternary structure, homodimer. It depends on Mg(2+) as a cofactor.

It carries out the reaction N-(5-phospho-beta-D-ribosyl)anthranilate + diphosphate = 5-phospho-alpha-D-ribose 1-diphosphate + anthranilate. It participates in amino-acid biosynthesis; L-tryptophan biosynthesis; L-tryptophan from chorismate: step 2/5. Its function is as follows. Catalyzes the transfer of the phosphoribosyl group of 5-phosphorylribose-1-pyrophosphate (PRPP) to anthranilate to yield N-(5'-phosphoribosyl)-anthranilate (PRA), the second step in tryptophan biosynthesis. This is Anthranilate phosphoribosyltransferase from Saccharomyces cerevisiae (strain ATCC 204508 / S288c) (Baker's yeast).